The following is a 503-amino-acid chain: Lysine--tRNA ligase (503 aa).

Glu414 and Glu421 together coordinate Mg(2+).

This sequence belongs to the class-II aminoacyl-tRNA synthetase family. In terms of assembly, homodimer. The cofactor is Mg(2+).

It is found in the cytoplasm. It carries out the reaction tRNA(Lys) + L-lysine + ATP = L-lysyl-tRNA(Lys) + AMP + diphosphate. This Laribacter hongkongensis (strain HLHK9) protein is Lysine--tRNA ligase.